A 573-amino-acid chain; its full sequence is MTHPDRANVNPGSPPLRETLSQLRLRELLLEVQDRIEQIVEGRDRLDGLIDAILAITSGLKLDATLRAIVHTAAELVDARYGALGVRGYDHRLVEFVYEGIDEETRHLIGSLPEGRGVLGALIEEPKPIRLDDISRHPASVGFPLHHPPMRTFLGVPVRIRDEVFGNLYLTEKADGQPFSDDDEVLVQALAAAAGIAVDNARLFEESRTREAWIEATRDIGTQMLAGADPAMVFRLIAEEALTLMAGAATLVAVPLDDEAPACEVDDLVIVEVAGEISPAVKQMTVAVSGTSIGGVFHDRTPRRFDRLDLAVDGPVEPGPALVLPLRAADTVAGVLVALRSADEQPFSDKQLDMMAAFADQAALAWRLATAQRQMREVEILTDRDRIARDLHDHVIQRLFAVGLTLQGAAPRARVPAVRESIYSSIDDLQEIIQEIRSAIFDLHAGPSRATGLRHRLDKVIDQLAIPALHTTVQYTGPLSVVDTVLANHAEAVLREAVSNAVRHANATSLAINVSVEDDVRVEVVDDGVGISGDITESGLRNLRQRADDAGGEFTVENMPTGGTLLRWSAPLR.

2 GAF domains span residues 61–198 (KLDA…GIAV) and 229–366 (DPAM…ALAW). Heme is bound at residue His-147. A Histidine kinase domain is found at 380-573 (ILTDRDRIAR…TLLRWSAPLR (194 aa)). A Phosphohistidine; by autocatalysis modification is found at His-392.

Mg(2+) serves as cofactor. It depends on heme as a cofactor.

The protein resides in the cytoplasm. In terms of biological role, interacts with the two-component regulatory system DevR/DevS (DosR/DosS) involved in onset of the dormancy response. Required for full induction of the DevR (DosR) regulon; required during early adaptation to anaerobiosis, to start induction of the DevR regulon. May act as a direct hypoxia/oxygen sensor. May be the secondary sensor for CO. Donates a phosphate group to DevR (DosR). The protein is Oxygen sensor histidine kinase response regulator DosT (dosT) of Mycobacterium tuberculosis (strain CDC 1551 / Oshkosh).